Here is a 272-residue protein sequence, read N- to C-terminus: Deaminated glutathione amidase (272 aa).

The CN hydrolase domain maps to 1 to 253 (MKPYLAAALQ…PGLAIAEINP (253 aa)). The active-site Proton acceptor is Glu43. The active-site Proton donor is Lys115. Cys158 (nucleophile) is an active-site residue.

The protein belongs to the carbon-nitrogen hydrolase superfamily. NIT1/NIT2 family.

It carries out the reaction N-(4-oxoglutaryl)-L-cysteinylglycine + H2O = L-cysteinylglycine + 2-oxoglutarate. Hydrolyzes deaminated glutathione (dGSH, 2-oxoglutaramate) to alpha-ketoglutarate (alpha-KG) and cysteinylglycine (specific activity 7.77 umol/min/mg), hydrolyzes alpha-ketoglutaramate (a-KGM, specific activity 2.13 umol/min/mg), has no activity on glutathione or L-glutamine. May function as a metabolite repair enzyme. The chain is Deaminated glutathione amidase from Synechocystis sp. (strain PCC 6803 / GT-S).